The following is a 562-amino-acid chain: Arylsulfatase H (562 aa).

Ca(2+) contacts are provided by Asp15, Asp16, and Cys55. Cys55 functions as the Nucleophile in the catalytic mechanism. Residue Cys55 is modified to 3-oxoalanine (Cys). Lys115 provides a ligand contact to substrate. His117 is a catalytic residue. Helical transmembrane passes span 167–187 (LWISTAVLSLVPLLLLIPKYA) and 189–209 (WFVVPWKVILTFALLAFLFFI). His271 contributes to the substrate binding site. Positions 323 and 324 each coordinate Ca(2+).

It belongs to the sulfatase family. Requires Ca(2+) as cofactor. In terms of processing, the conversion to 3-oxoalanine (also known as C-formylglycine, FGly), of a serine or cysteine residue in prokaryotes and of a cysteine residue in eukaryotes, is critical for catalytic activity.

The protein localises to the membrane. The sequence is that of Arylsulfatase H (ARSH) from Canis lupus familiaris (Dog).